Reading from the N-terminus, the 323-residue chain is Fructose-1,6-bisphosphatase class 1 (323 aa).

Residues E90, D111, L113, and D114 each contribute to the Mg(2+) site. Residues 114–117 (DGSS), Y222, and K253 each bind substrate. A Mg(2+)-binding site is contributed by E259.

The protein belongs to the FBPase class 1 family. As to quaternary structure, homotetramer. Mg(2+) is required as a cofactor.

It localises to the cytoplasm. The enzyme catalyses beta-D-fructose 1,6-bisphosphate + H2O = beta-D-fructose 6-phosphate + phosphate. The protein operates within carbohydrate biosynthesis; gluconeogenesis. This chain is Fructose-1,6-bisphosphatase class 1, found in Pelobacter propionicus (strain DSM 2379 / NBRC 103807 / OttBd1).